The primary structure comprises 548 residues: LDL receptor repeat-containing protein egg-2 (548 aa).

Topologically, residues 1–49 are cytoplasmic; sequence MSQQAGNAQRGRFDEEPMSLGEKISHRMDQLKEIVSSSCPCAGKFPPVA. The chain crosses the membrane as a helical; Signal-anchor for type II membrane protein span at residues 50–70; that stretch reads IVLIVALIILGVIIAVPLVIF. The Extracellular portion of the chain corresponds to 71–548; the sequence is LSPSAQAMSS…LALKNSGLRP (478 aa). N119 carries an N-linked (GlcNAc...) asparagine glycan. 8 LDL-receptor class A domains span residues 122-160, 161-213, 215-252, 253-288, 291-328, 370-412, 416-454, and 455-492; these read TCSG…ENCK, ECQS…ASCR, KCSK…SNCN, KCQK…HQCD, TCSG…ENCP, KCDP…KKCT, ECVV…KGCD, and KCPS…HKCS. 23 disulfide bridges follow: C130/C150, C144/C159, C162/C190, C168/C203, C197/C212, C216/C229, C223/C242, C236/C251, C254/C265, C261/C278, C272/C287, C292/C305, C300/C318, C312/C327, C371/C389, C379/C402, C396/C411, C417/C431, C427/C444, C438/C453, C456/C469, C463/C482, and C476/C491. N-linked (GlcNAc...) asparagine glycosylation occurs at N244. The N-linked (GlcNAc...) asparagine glycan is linked to N527.

Its subcellular location is the cell membrane. The protein resides in the endosome membrane. Functionally, probable receptor which is required for the oocyte-to-zygote transition although its exact function is controversial. Redundantly with egg-1, seems to be required for fertilization probably by promoting the interaction or fusion between sperm and oocyte. Conversely, shown to be dispensable for fertilization but required together with egg-1 for the formation of a continuous and cohesive eggshell chitin layer by maintaining a homogenous distribution of chitin synthase chs-1 at the unfertilized oocyte cell membrane. Appears to recruit or maintain together to the unfertilized oocyte cortex several proteins including chs-1, kinase mbk-2 and pseudophosphatase egg-3, and possibly egg-4 and egg-5. The chain is LDL receptor repeat-containing protein egg-2 from Caenorhabditis elegans.